The chain runs to 391 residues: Matrix metalloproteinase-23 (391 aa).

The Cytoplasmic segment spans residues 1-19 (MGWRACLRPEASGAVQGRW). Residues 1–79 (MGWRACLRPE…LSMLVTRRRR (79 aa)) constitute a propeptide that is removed on maturation. The helical; Signal-anchor for type II membrane protein transmembrane segment at 20 to 38 (LGAVLSGLCLLSALAFLEW) threads the bilayer. At 39–391 (LGSPTETAWN…TYSWRVRVRS (353 aa)) the chain is on the lumenal side. N-linked (GlcNAc...) asparagine glycans are attached at residues Asn93 and Asn149. Zn(2+) is bound at residue His212. Glu213 is a catalytic residue. 2 residues coordinate Zn(2+): His216 and His222. A glycan (N-linked (GlcNAc...) asparagine) is linked at Asn233. Residues 256-290 (CLDRIFVCTSWARKGFCDVRQRLMKRLCPRSCDFC) form the ShKT domain. 3 disulfides stabilise this stretch: Cys256/Cys290, Cys263/Cys283, and Cys272/Cys287. The 86-residue stretch at 296–381 (PTVATTTSPT…VVRHRQRVLT (86 aa)) folds into the Ig-like C2-type domain. Residue Asn317 is glycosylated (N-linked (GlcNAc...) asparagine). Cys322 and Cys371 form a disulfide bridge.

It belongs to the peptidase M10A family. Requires Zn(2+) as cofactor. In terms of processing, N-glycosylated. Proteolytic cleavage might yield an active form. In terms of tissue distribution, expressed at the highest levels in ovary and uterus. In ovary expression is strictly confined to granulosa cells of preantral and small antral follicles. Detected also in testis and prostate.

It localises to the membrane. The protein resides in the endoplasmic reticulum membrane. Inhibited by TIMP2. In terms of biological role, protease. May regulate the surface expression of some potassium channels by retaining them in the endoplasmic reticulum. The protein is Matrix metalloproteinase-23 (Mmp23) of Rattus norvegicus (Rat).